Here is a 321-residue protein sequence, read N- to C-terminus: MKEDCLPSSHVPISDSKSIQKSELLGLLKTYNCYHEGKSFQLRHREEEGTLIIEGLLNIAWGLRRPIRLQMQDDREQVHLPSTSWMPRRPSCPLKEPSPQNGNITAQGPSIQPVHKAESSTDSSGPLEEAEEAPQLMRTKSDASCMSQRRPKCRAPGEAQRIRRHRFSINGHFYNHKTSVFTPAYGSVTNVRVNSTMTTLQVLTLLLNKFRVEDGPSEFALYIVHESGERTKLKDCEYPLISRILHGPCEKIARIFLMEADLGVEVPHEVAQYIKFEMPVLDSFVEKLKEEEEREIIKLTMKFQALRLTMLQRLEQLVEAK.

Residues 79–159 (HLPSTSWMPR…RPKCRAPGEA (81 aa)) are disordered. The span at 98–110 (SPQNGNITAQGPS) shows a compositional bias: polar residues. A Phosphoserine modification is found at Ser141. A Ras-associating domain is found at 174-262 (YNHKTSVFTP…ARIFLMEADL (89 aa)). The region spanning 270 to 317 (VAQYIKFEMPVLDSFVEKLKEEEEREIIKLTMKFQALRLTMLQRLEQL) is the SARAH domain.

Interacts directly with activated KRAS in a GTP-dependent manner. As to expression, widely expressed. Frequently down-regulated in tumor cell lines.

Functionally, potential tumor suppressor. May act as a KRAS effector protein. May promote apoptosis and cell cycle arrest. This chain is Ras association domain-containing protein 4 (RASSF4), found in Homo sapiens (Human).